The following is a 439-amino-acid chain: Guanine deaminase (439 aa).

H82 and H84 together coordinate Zn(2+). Residues 84–87 (HYPQ), 209–210 (RF), 237–240 (HLCE), and D327 contribute to the substrate site. Residues H237 and D327 each contribute to the Zn(2+) site.

The protein belongs to the metallo-dependent hydrolases superfamily. ATZ/TRZ family. It depends on Zn(2+) as a cofactor.

The catalysed reaction is guanine + H2O + H(+) = xanthine + NH4(+). It participates in purine metabolism; guanine degradation; xanthine from guanine: step 1/1. In terms of biological role, catalyzes the hydrolytic deamination of guanine, producing xanthine and ammonia. This is Guanine deaminase (guaD) from Escherichia coli (strain K12).